We begin with the raw amino-acid sequence, 462 residues long: Putative E3 ubiquitin-protein ligase XBAT35 (462 aa).

ANK repeat units lie at residues Ser6–Trp35, Glu39–Ala69, and His75–Val104. Disordered regions lie at residues His277–Ser341 and Ser356–Arg402. Positions Ser304 to His317 are enriched in polar residues. Positions Ser319–Ser341 are enriched in low complexity. An RING-type zinc finger spans residues Cys411 to Arg450.

The catalysed reaction is S-ubiquitinyl-[E2 ubiquitin-conjugating enzyme]-L-cysteine + [acceptor protein]-L-lysine = [E2 ubiquitin-conjugating enzyme]-L-cysteine + N(6)-ubiquitinyl-[acceptor protein]-L-lysine.. It participates in protein modification; protein ubiquitination. Its function is as follows. No E3 ubiquitin-protein ligase activity observed when associated with the E2 enzyme UBC8 in vitro. This Arabidopsis thaliana (Mouse-ear cress) protein is Putative E3 ubiquitin-protein ligase XBAT35 (XBAT35).